A 421-amino-acid polypeptide reads, in one-letter code: Serine--tRNA ligase (421 aa).

227–229 (TSE) is a binding site for L-serine. ATP-binding positions include 257-259 (RRE) and valine 273. Residue glutamate 280 participates in L-serine binding. Residue 344 to 347 (ELTS) participates in ATP binding. An L-serine-binding site is contributed by threonine 379.

Belongs to the class-II aminoacyl-tRNA synthetase family. Type-1 seryl-tRNA synthetase subfamily. As to quaternary structure, homodimer. The tRNA molecule binds across the dimer.

Its subcellular location is the cytoplasm. The catalysed reaction is tRNA(Ser) + L-serine + ATP = L-seryl-tRNA(Ser) + AMP + diphosphate + H(+). The enzyme catalyses tRNA(Sec) + L-serine + ATP = L-seryl-tRNA(Sec) + AMP + diphosphate + H(+). Its pathway is aminoacyl-tRNA biosynthesis; selenocysteinyl-tRNA(Sec) biosynthesis; L-seryl-tRNA(Sec) from L-serine and tRNA(Sec): step 1/1. Catalyzes the attachment of serine to tRNA(Ser). Is also able to aminoacylate tRNA(Sec) with serine, to form the misacylated tRNA L-seryl-tRNA(Sec), which will be further converted into selenocysteinyl-tRNA(Sec). In Leifsonia xyli subsp. xyli (strain CTCB07), this protein is Serine--tRNA ligase.